The sequence spans 479 residues: Chromosomal replication initiator protein DnaA (479 aa).

The tract at residues 1–74 (MFSGVVMAWQ…RSLTGVDSSI (74 aa)) is domain I, interacts with DnaA modulators. The interval 74–142 (ITDVRFLEKK…SVPKNNASIR (69 aa)) is domain II. The segment at 143–360 (ALHPRYTFDE…SAITAIGARA (218 aa)) is domain III, AAA+ region. 4 residues coordinate ATP: Gly-187, Gly-189, Lys-190, and Ser-191. Residues 361 to 479 (RLMGGYIDMN…NLLSDKVKQI (119 aa)) form a domain IV, binds dsDNA region.

It belongs to the DnaA family. Oligomerizes as a right-handed, spiral filament on DNA at oriC.

The protein resides in the cytoplasm. Its function is as follows. Plays an essential role in the initiation and regulation of chromosomal replication. ATP-DnaA binds to the origin of replication (oriC) to initiate formation of the DNA replication initiation complex once per cell cycle. Binds the DnaA box (a 9 base pair repeat at the origin) and separates the double-stranded (ds)DNA. Forms a right-handed helical filament on oriC DNA; dsDNA binds to the exterior of the filament while single-stranded (ss)DNA is stabiized in the filament's interior. The ATP-DnaA-oriC complex binds and stabilizes one strand of the AT-rich DNA unwinding element (DUE), permitting loading of DNA polymerase. After initiation quickly degrades to an ADP-DnaA complex that is not apt for DNA replication. Binds acidic phospholipids. The polypeptide is Chromosomal replication initiator protein DnaA (Desulfotalea psychrophila (strain LSv54 / DSM 12343)).